The sequence spans 169 residues: Chorismate pyruvate-lyase (169 aa).

Positions 37, 79, 117, and 158 each coordinate substrate.

The protein belongs to the UbiC family. In terms of assembly, monomer.

It is found in the cytoplasm. The catalysed reaction is chorismate = 4-hydroxybenzoate + pyruvate. The protein operates within cofactor biosynthesis; ubiquinone biosynthesis. Its function is as follows. Removes the pyruvyl group from chorismate, with concomitant aromatization of the ring, to provide 4-hydroxybenzoate (4HB) for the ubiquinone pathway. This is Chorismate pyruvate-lyase from Proteus mirabilis (strain HI4320).